A 217-amino-acid polypeptide reads, in one-letter code: Cytidylate kinase (217 aa).

11-19 (GPAGAGKST) contacts ATP.

Belongs to the cytidylate kinase family. Type 1 subfamily.

The protein localises to the cytoplasm. It catalyses the reaction CMP + ATP = CDP + ADP. It carries out the reaction dCMP + ATP = dCDP + ADP. The chain is Cytidylate kinase from Clostridium perfringens (strain SM101 / Type A).